Here is a 386-residue protein sequence, read N- to C-terminus: MGRVGVLLLNLGGPDKLEDVRPFLFNLFADPEIIRLPAPWMQKPLAWLISTLRAGKSQENYKEIGGGSPLRQITEAQGTALAQKLAEWGQEVKVYVGMRYWHPFTEEAIAEIKKDDLDQLVVLPLYPQFSISTSGSSFRVLEEMWRTDKDLNQLDYTLIPSWYDHPQYIAAMVDLIRQELDQFDNPDQAHIFFSAHGVPQSYVEEAGDPYQREIEECTKLIMEALGRPNDYTLAYQSRVGPVEWLQPYTEDSLIALGEKGVKDLVVIPISFVSEHIETLQEIDIEYREVAEEAGIENFRRVPALNTHPLFIESLANLVTDSLEQCPRTFGQVTHPKENMKMYPQELSWGMNTSAEVLNGRLAMIGFLALLLELISGQGPLHFVGIM.

Residues His-196 and Glu-277 each coordinate Fe cation.

It belongs to the ferrochelatase family.

The protein localises to the cytoplasm. The catalysed reaction is heme b + 2 H(+) = protoporphyrin IX + Fe(2+). The protein operates within porphyrin-containing compound metabolism; protoheme biosynthesis; protoheme from protoporphyrin-IX: step 1/1. Catalyzes the ferrous insertion into protoporphyrin IX. This is Ferrochelatase from Picosynechococcus sp. (strain ATCC 27264 / PCC 7002 / PR-6) (Agmenellum quadruplicatum).